A 201-amino-acid chain; its full sequence is Retinol binding protein 4 (201 aa).

The signal sequence occupies residues 1–18 (MAWVWALVLLAALGSARA). Disulfide bonds link C22/C178, C88/C192, and C138/C147. Q116 contributes to the substrate binding site. R139 carries the omega-N-methylarginine modification.

This sequence belongs to the calycin superfamily. Lipocalin family. Interacts with TTR. Interaction with TTR prevents its loss by filtration through the kidney glomeruli. Interacts with STRA6. In terms of tissue distribution, highly expressed in liver. Also expressed in adipose tissue. Expressed by endometrium from days 16-25 and by unattached chorioallantois from days 30-36 during pregnancy.

Its subcellular location is the secreted. Its function is as follows. Retinol-binding protein that mediates retinol transport in blood plasma. Delivers retinol from the liver stores to the peripheral tissues. Transfers the bound all-trans retinol to STRA6, that then facilitates retinol transport across the cell membrane. This is Retinol binding protein 4 from Felis catus (Cat).